The sequence spans 453 residues: O-methyltransferase bik3 (453 aa).

A disordered region spans residues 1–25 (MVSNGISNGTNGTNGTTTNGTNGVN). A compositionally biased stretch (low complexity) spans 8–25 (NGTNGTNGTTTNGTNGVN). An S-adenosyl-L-methionine-binding site is contributed by aspartate 305. Histidine 355 serves as the catalytic Proton acceptor.

This sequence belongs to the class I-like SAM-binding methyltransferase superfamily. Cation-independent O-methyltransferase family. COMT subfamily.

Its pathway is secondary metabolite biosynthesis. In terms of biological role, O-methyltransferase; part of the gene cluster that mediates the biosynthesis of bikaverin, a red pigment also considered as a mycotoxin. The first stage is catalyzed by the polyketide synthase bik1, which catalyzes the formation of the intermediate SMA76a also knowm as pre-bikaverin. FAD-dependent monooxygenase bik2 might then be responsible for the oxidation of pre-bikaverin to oxo-pre-bikaverin which is in turn methylated by the O-methyltransferase bik3 to me-oxo-pre-bikaverin. A further cycle of oxydation and methylation by bik2 and bik3 leads to the final product of bikaverin, via a nor-bikaverin intermediate. The protein is O-methyltransferase bik3 of Gibberella fujikuroi (strain CBS 195.34 / IMI 58289 / NRRL A-6831) (Bakanae and foot rot disease fungus).